We begin with the raw amino-acid sequence, 609 residues long: Neutral protease (609 aa).

Positions 1 to 24 (MNKTQRHINWLLAVSAATALPVTA) are cleaved as a signal peptide. The propeptide occupies 25–196 (AEMINVNDGS…VLQTWDGLNH (172 aa)). Histidine 343 serves as a coordination point for Zn(2+). Glutamate 344 is a catalytic residue. Zn(2+) contacts are provided by histidine 347 and glutamate 367. The Proton donor role is filled by histidine 426.

It belongs to the peptidase M4 family. Zn(2+) is required as a cofactor.

The protein resides in the secreted. The catalysed reaction is Preferential cleavage of bonds with bulky hydrophobic groups in P2 and P1'. Phe at P1' is the most favored residue, which distinguished this enzyme from thermolysin.. Functionally, extracellular zinc metalloprotease. This chain is Neutral protease (nprV), found in Vibrio proteolyticus (Aeromonas proteolytica).